The chain runs to 90 residues: Putative Fis-like DNA-binding protein (90 aa).

A DNA-binding region (H-T-H motif) is located at residues 66–85; that stretch reads QSRAAALLGIHRATLRKKLK.

Belongs to the transcriptional regulatory Fis family.

This chain is Putative Fis-like DNA-binding protein, found in Xylella fastidiosa (strain 9a5c).